The primary structure comprises 484 residues: Argininosuccinate lyase (484 aa).

Belongs to the lyase 1 family. Argininosuccinate lyase subfamily.

The protein resides in the cytoplasm. The enzyme catalyses 2-(N(omega)-L-arginino)succinate = fumarate + L-arginine. The protein operates within amino-acid biosynthesis; L-arginine biosynthesis; L-arginine from L-ornithine and carbamoyl phosphate: step 3/3. This is Argininosuccinate lyase from Methanocaldococcus jannaschii (strain ATCC 43067 / DSM 2661 / JAL-1 / JCM 10045 / NBRC 100440) (Methanococcus jannaschii).